The primary structure comprises 283 residues: uncharacterized protein (283 aa).

Residue G2 is the site of N-myristoyl glycine; by host attachment. 6 N-linked (GlcNAc...) asparagine; by host glycosylation sites follow: N31, N95, N105, N108, N137, and N147. A run of 2 helical transmembrane segments spans residues 181–201 (IIAAIIIIVIIAVIIGAVVYF) and 250–270 (FIVLLIMVLIIVILLKTLDIP). An N-linked (GlcNAc...) asparagine; by host glycan is attached at N277.

It localises to the membrane. This is an uncharacterized protein from Acanthamoeba polyphaga (Amoeba).